Consider the following 508-residue polypeptide: Photosystem II CP47 reaction center protein (508 aa).

Helical transmembrane passes span 21–36, 101–115, 140–156, 203–218, 237–252, and 457–472; these read SVHI…WAGS, IVFS…IWHW, GIHL…FGAF, IAAG…FHLS, VLSS…AFVV, and SFAL…HGSR.

The protein belongs to the PsbB/PsbC family. PsbB subfamily. In terms of assembly, PSII is composed of 1 copy each of membrane proteins PsbA, PsbB, PsbC, PsbD, PsbE, PsbF, PsbH, PsbI, PsbJ, PsbK, PsbL, PsbM, PsbT, PsbX, PsbY, PsbZ, Psb30/Ycf12, at least 3 peripheral proteins of the oxygen-evolving complex and a large number of cofactors. It forms dimeric complexes. The cofactor is Binds multiple chlorophylls. PSII binds additional chlorophylls, carotenoids and specific lipids..

The protein resides in the plastid. The protein localises to the chloroplast thylakoid membrane. In terms of biological role, one of the components of the core complex of photosystem II (PSII). It binds chlorophyll and helps catalyze the primary light-induced photochemical processes of PSII. PSII is a light-driven water:plastoquinone oxidoreductase, using light energy to abstract electrons from H(2)O, generating O(2) and a proton gradient subsequently used for ATP formation. This Draba nemorosa (Woodland whitlowgrass) protein is Photosystem II CP47 reaction center protein.